The chain runs to 461 residues: Bifunctional protein HldE (461 aa).

The interval 1 to 315 (MKKILVIGDL…LILNQTHPKI (315 aa)) is ribokinase. Residue 191–194 (NRTE) coordinates ATP. Residue aspartate 260 is part of the active site. The interval 332 to 461 (FTNGCFDLLH…IEKIKRTCND (130 aa)) is cytidylyltransferase.

In the N-terminal section; belongs to the carbohydrate kinase PfkB family. This sequence in the C-terminal section; belongs to the cytidylyltransferase family. Homodimer.

The enzyme catalyses D-glycero-beta-D-manno-heptose 7-phosphate + ATP = D-glycero-beta-D-manno-heptose 1,7-bisphosphate + ADP + H(+). It catalyses the reaction D-glycero-beta-D-manno-heptose 1-phosphate + ATP + H(+) = ADP-D-glycero-beta-D-manno-heptose + diphosphate. It functions in the pathway nucleotide-sugar biosynthesis; ADP-L-glycero-beta-D-manno-heptose biosynthesis; ADP-L-glycero-beta-D-manno-heptose from D-glycero-beta-D-manno-heptose 7-phosphate: step 1/4. Its pathway is nucleotide-sugar biosynthesis; ADP-L-glycero-beta-D-manno-heptose biosynthesis; ADP-L-glycero-beta-D-manno-heptose from D-glycero-beta-D-manno-heptose 7-phosphate: step 3/4. The protein operates within bacterial outer membrane biogenesis; LPS core biosynthesis. Its function is as follows. Catalyzes the phosphorylation of D-glycero-D-manno-heptose 7-phosphate at the C-1 position to selectively form D-glycero-beta-D-manno-heptose-1,7-bisphosphate. Functionally, catalyzes the ADP transfer from ATP to D-glycero-beta-D-manno-heptose 1-phosphate, yielding ADP-D-glycero-beta-D-manno-heptose. In Helicobacter pylori (strain ATCC 700392 / 26695) (Campylobacter pylori), this protein is Bifunctional protein HldE.